Consider the following 310-residue polypeptide: MYKLAAIVGPTAVGKTNISLEVARQINGEIISCDSMQLYRGMNIGTAKASKEEQNIVAHHLIDIADPHENFTVARYQSLVKDLISTINARGKIPILVGGTGLYYQSVVDDYTFFPMEVRQSIRDKWNAIIQEKGLPHVYRLLEQIDPAYAQIISPNDQKRVVRALEVYELTGKAFSTLQDRAENTYYLAVVGLYLERRELYARIERRVDEMIKKGLIEEVAALREKGIDLSYNSMQALGYKQVFYFLEGFINREELLNEIKRETRRYAKRQLTWFKKDQRIKWFNVGDFSDEELLVKNICTFMEGQFGIV.

9 to 16 is an ATP binding site; sequence GPTAVGKT. A substrate-binding site is contributed by 11 to 16; that stretch reads TAVGKT. The interval 34–37 is interaction with substrate tRNA; that stretch reads DSMQ.

The protein belongs to the IPP transferase family. Monomer. It depends on Mg(2+) as a cofactor.

The enzyme catalyses adenosine(37) in tRNA + dimethylallyl diphosphate = N(6)-dimethylallyladenosine(37) in tRNA + diphosphate. Functionally, catalyzes the transfer of a dimethylallyl group onto the adenine at position 37 in tRNAs that read codons beginning with uridine, leading to the formation of N6-(dimethylallyl)adenosine (i(6)A). The polypeptide is tRNA dimethylallyltransferase (Syntrophomonas wolfei subsp. wolfei (strain DSM 2245B / Goettingen)).